The primary structure comprises 117 residues: Snaclec CHH-B subunit beta (117 aa).

3 cysteine pairs are disulfide-bonded: C2/C13, C30/C115, and C92/C107. Residues 9–116 form the C-type lectin domain; it reads YEGHCYRVFQ…CSKTHNVVCK (108 aa).

This sequence belongs to the snaclec family. Heterodimer of subunits alpha and beta; disulfide-linked. In terms of tissue distribution, expressed by the venom gland.

It localises to the secreted. Its function is as follows. Binds to the subunit GPIbalpha (GP1BA) of the platelet GPIb/V/IX receptor system. It inhibits ristocetin- and vWF-induced platelet aggregation in platelet-rich plasma by inhibiting the binding of vWF to GPIbalpha. This chain is Snaclec CHH-B subunit beta, found in Crotalus horridus (Timber rattlesnake).